Reading from the N-terminus, the 452-residue chain is Glutamyl-tRNA(Gln) amidotransferase subunit A (452 aa).

Active-site charge relay system residues include K56 and S131. S155 serves as the catalytic Acyl-ester intermediate.

It belongs to the amidase family. GatA subfamily. Heterotrimer of A, B and C subunits.

The catalysed reaction is L-glutamyl-tRNA(Gln) + L-glutamine + ATP + H2O = L-glutaminyl-tRNA(Gln) + L-glutamate + ADP + phosphate + H(+). Allows the formation of correctly charged Gln-tRNA(Gln) through the transamidation of misacylated Glu-tRNA(Gln) in organisms which lack glutaminyl-tRNA synthetase. The reaction takes place in the presence of glutamine and ATP through an activated gamma-phospho-Glu-tRNA(Gln). The chain is Glutamyl-tRNA(Gln) amidotransferase subunit A from Campylobacter concisus (strain 13826).